Reading from the N-terminus, the 553-residue chain is Phenylalanine--tRNA ligase beta subunit (553 aa).

A B5 domain is found at 273–349 (FNVRNIDIEV…RAFGYNNITP (77 aa)). Mg(2+) contacts are provided by aspartate 327, aspartate 333, aspartate 336, and aspartate 337.

This sequence belongs to the phenylalanyl-tRNA synthetase beta subunit family. Type 2 subfamily. Tetramer of two alpha and two beta subunits. Requires Mg(2+) as cofactor.

Its subcellular location is the cytoplasm. The catalysed reaction is tRNA(Phe) + L-phenylalanine + ATP = L-phenylalanyl-tRNA(Phe) + AMP + diphosphate + H(+). In Methanocella arvoryzae (strain DSM 22066 / NBRC 105507 / MRE50), this protein is Phenylalanine--tRNA ligase beta subunit.